The sequence spans 689 residues: tRNA wybutosine-synthesizing protein 4 (689 aa).

A disordered region spans residues Met-1–Val-33. Over residues Arg-14–Lys-26 the composition is skewed to basic residues. Residues Arg-84, Gly-111, Asp-137, Asp-183–Leu-184, and Glu-215 each bind S-adenosyl-L-methionine.

The protein belongs to the methyltransferase superfamily. LCMT family.

It carries out the reaction 7-[(3S)-3-amino-3-carboxypropyl]wyosine(37) in tRNA(Phe) + S-adenosyl-L-methionine = 7-[(3S)-(3-amino-3-methoxycarbonyl)propyl]wyosine(37) in tRNA(Phe) + S-adenosyl-L-homocysteine. The catalysed reaction is 7-[(3S)-(3-amino-3-methoxycarbonyl)propyl]wyosine(37) in tRNA(Phe) + S-adenosyl-L-methionine + CO2 = wybutosine(37) in tRNA(Phe) + S-adenosyl-L-homocysteine + 2 H(+). It functions in the pathway tRNA modification; wybutosine-tRNA(Phe) biosynthesis. Its function is as follows. Probable S-adenosyl-L-methionine-dependent methyltransferase that acts as a component of the wybutosine biosynthesis pathway. Wybutosine is a hyper modified guanosine with a tricyclic base found at the 3'-position adjacent to the anticodon of eukaryotic phenylalanine tRNA. May methylate the carboxyl group of leucine residues to form alpha-leucine ester residues. The chain is tRNA wybutosine-synthesizing protein 4 (PPM2) from Candida albicans (strain SC5314 / ATCC MYA-2876) (Yeast).